Reading from the N-terminus, the 183-residue chain is Peptidoglycan recognition protein 1 (183 aa).

Positions 1 to 17 (MLFAWAPFPALLGLADS) are cleaved as a signal peptide. 3 disulfides stabilise this stretch: Cys-18–Cys-142, Cys-34–Cys-79, and Cys-55–Cys-61. One can recognise an N-acetylmuramoyl-L-alanine amidase domain in the interval 40-168 (KPVRYVVISH…RDVQSTLSPG (129 aa)).

This sequence belongs to the N-acetylmuramoyl-L-alanine amidase 2 family. As to expression, expressed in all regions of the brain.

The protein resides in the secreted. Its subcellular location is the cytoplasmic granule. Innate immunity protein that plays several important functions in antimicrobial and antitumor defense systems. Acts as a pattern receptor that binds to murein peptidoglycans (PGN) of Gram-positive bacteria and thus provides bactericidal activity. Forms an equimolar complex with heat shock protein HSPA1A and induces programmed cell death through apoptosis and necroptosis in tumor cell lines by activating the TNFR1 receptor on the target cell membrane. In addition, acts in complex with the Ca(2+)-binding protein S100A4 as a chemoattractant able to induce lymphocyte movement. Mechanistically, this complex acts as a ligand of the chemotactic receptors CCR5 and CXCR3 which are present on the cells of the immune system. Promotes also the activation of lymphocytes that become able to kill virus-infected cells as well as tumor cells by modulating the spectrum of their target-cell specificity. Induction of cytotoxicity on monocyte surface requires interaction with TREM1 receptor. The polypeptide is Peptidoglycan recognition protein 1 (Pglyrp1) (Rattus norvegicus (Rat)).